A 273-amino-acid polypeptide reads, in one-letter code: Putative pyruvate, phosphate dikinase regulatory protein (273 aa).

151–158 (GVSRTSKT) lines the ADP pocket.

This sequence belongs to the pyruvate, phosphate/water dikinase regulatory protein family. PDRP subfamily.

It carries out the reaction N(tele)-phospho-L-histidyl/L-threonyl-[pyruvate, phosphate dikinase] + ADP = N(tele)-phospho-L-histidyl/O-phospho-L-threonyl-[pyruvate, phosphate dikinase] + AMP + H(+). The enzyme catalyses N(tele)-phospho-L-histidyl/O-phospho-L-threonyl-[pyruvate, phosphate dikinase] + phosphate + H(+) = N(tele)-phospho-L-histidyl/L-threonyl-[pyruvate, phosphate dikinase] + diphosphate. Functionally, bifunctional serine/threonine kinase and phosphorylase involved in the regulation of the pyruvate, phosphate dikinase (PPDK) by catalyzing its phosphorylation/dephosphorylation. In Desulfitobacterium hafniense (strain Y51), this protein is Putative pyruvate, phosphate dikinase regulatory protein.